Consider the following 429-residue polypeptide: Histidine--tRNA ligase (429 aa).

This sequence belongs to the class-II aminoacyl-tRNA synthetase family. As to quaternary structure, homodimer.

It is found in the cytoplasm. The enzyme catalyses tRNA(His) + L-histidine + ATP = L-histidyl-tRNA(His) + AMP + diphosphate + H(+). The polypeptide is Histidine--tRNA ligase (Desulfotalea psychrophila (strain LSv54 / DSM 12343)).